Here is a 605-residue protein sequence, read N- to C-terminus: MVRNKSVFVVLLFSLFLSFGLLCSAKDFPGRRSEDDPQQRYEDCRKRCQLETRGQTEQDKCEDRSETQLKEEQQRDGEDPQRRYQDCRQHCQQEERRLRPHCEQSCREQYEKQQQQQPDKQFKECQQRCQWQEQRPERKQQCVKECREQYQEDPWKGERENKWREEEEEESDEGEQQQRNNPYYFHRRSFQERFREEHGNFRVLQRFADKHHLLRGINEFRIAILEANPNTFVLPHHCDAEKIYVVTNGRGTVTFVTHENKESYNVVPGVVVRIPAGSTVYLANQDNREKLTIAVLHRPVNNPGQFQKFFPAGQENPQSYLRIFSREILEAVFNTRSEQLDELPGGRQSHRRQQGQGMFRKASQEQIRALSQGATSPRGKGSEGYAFNLLSQTPRYSNQNGRFYEACPRNFQQQLREVDSSVVAFEINKGSIFVPHYNSKATFVVLVTEGNGHVEMVCPHLSRQSSDWSSREEEEQEEQEVERRSGQYKRVRAQLSTGNLFVVPAGHPVTFVASQNEDLGLLGFGLYNGQDNKRIFVAGKTNNVRQWDRQAKELAFGVESRLVDEVFNNNPQESYFVSGRDRRGFDERRGSNNPLSPFLDFARLF.

Residues Met1–Cys23 form the signal peptide. Disordered stretches follow at residues Thr52–Gln81 and Gly157–Asn181. Over residues Glu166 to Glu175 the composition is skewed to acidic residues. Cupin type-1 domains follow at residues Tyr183–Asp341 and Phe387–Asp564. The tract at residues Ser465 to Ser485 is disordered.

Belongs to the 7S seed storage protein family.

The protein resides in the vacuole. Its subcellular location is the aleurone grain. Functionally, seed storage protein. The protein is Vicilin GC72-A of Gossypium hirsutum (Upland cotton).